Consider the following 127-residue polypeptide: Large ribosomal subunit protein bL17 (127 aa).

Belongs to the bacterial ribosomal protein bL17 family. In terms of assembly, part of the 50S ribosomal subunit. Contacts protein L32.

This Vibrio vulnificus (strain CMCP6) protein is Large ribosomal subunit protein bL17.